The sequence spans 351 residues: Transmembrane protein 115 (351 aa).

At 1–19 (MQRALPGARQHLGAILASA) the chain is on the cytoplasmic side. The mediates homooligomerization stretch occupies residues 1 to 205 (MQRALPGARQ…FGLLSSWVYL (205 aa)). Residues 20-40 (SVVVKALCAAVLFLYLLSFAV) form a helical membrane-spanning segment. Residues 41–97 (DTGCLAVTPGYLFPPNFWIWTLATHGLMEQHVWDVAISLTTVVVAGRLLEPLWGALE) lie on the Lumenal side of the membrane. The chain crosses the membrane as a helical span at residues 98–118 (LLIFFSVVNVSVGLLGAFAYL). The Cytoplasmic segment spans residues 119–126 (LTYMASFN). The chain crosses the membrane as a helical span at residues 127–147 (LVYLFTVRIHGALGFLGGVLV). Topologically, residues 148-165 (ALKQTMGDCVVLRVPQVR) are lumenal. Residues 166 to 186 (VSVMPMLLLALLLLLRLATLL) form a helical membrane-spanning segment. Over 187–351 (QSPALASYGF…ITFEAAPPTL (165 aa)) the chain is Cytoplasmic. A mediates localization to the Golgi region spans residues 206–229 (RFYQRHSRGRGDMADHFAFATFFP). The disordered stretch occupies residues 301–351 (QSIWPSMDDDEEESGAKVDSPLPSDKAPTPPGKGAAPESSLITFEAAPPTL). A Phosphothreonine modification is found at T329.

This sequence belongs to the TMEM115 family. As to quaternary structure, homooligomer. Interacts with COPB1. May interact with LMAN1. Interacts with the COG complex; probably through COG3. In terms of tissue distribution, expressed strongly in kidney and skeletal muscle, followed by liver, placenta, pancreas, and lung, with low amounts in heart and only traces in brain. Widely expressed with ubiquitous expression in epithelial tissues (at protein level).

The protein resides in the golgi apparatus. It is found in the golgi stack membrane. Its function is as follows. May play a role in retrograde transport of proteins from the Golgi to the endoplasmic reticulum. May indirectly play a role in protein glycosylation in the Golgi. This Homo sapiens (Human) protein is Transmembrane protein 115.